The sequence spans 102 residues: Iron-sulfur cluster assembly protein CyaY (102 aa).

This sequence belongs to the frataxin family.

Functionally, involved in iron-sulfur (Fe-S) cluster assembly. May act as a regulator of Fe-S biogenesis. The protein is Iron-sulfur cluster assembly protein CyaY of Actinobacillus succinogenes (strain ATCC 55618 / DSM 22257 / CCUG 43843 / 130Z).